A 414-amino-acid polypeptide reads, in one-letter code: Eukaryotic initiation factor 4A-3 (414 aa).

The Q motif motif lies at 41-69 (ESFDDMGLQENLLRGIYAYGFEKPSAIQQ). The Helicase ATP-binding domain occupies 72 to 242 (IVPFCKGLDV…RKFMNKPVRI (171 aa)). 85 to 92 (AQSGTGKT) is an ATP binding site. The short motif at 190–193 (DEAD) is the DEAD box element. One can recognise a Helicase C-terminal domain in the interval 253–414 (GIKQFYVNVE…ELPANVADLL (162 aa)).

It belongs to the DEAD box helicase family. eIF4A subfamily. In terms of assembly, eIF4F is a multi-subunit complex, the composition of which varies with external and internal environmental conditions. It is composed of at least EIF4A, EIF4E and EIF4G. Interacts with DRM2 (via UBA domains).

It localises to the cytoplasm. The protein localises to the nucleus. It catalyses the reaction ATP + H2O = ADP + phosphate + H(+). In terms of biological role, ATP-dependent RNA helicase which is a subunit of the eIF4F complex involved in cap recognition and is required for mRNA binding to ribosome. In the current model of translation initiation, eIF4A unwinds RNA secondary structures in the 5'-UTR of mRNAs which is necessary to allow efficient binding of the small ribosomal subunit, and subsequent scanning for the initiator codon. The protein is Eukaryotic initiation factor 4A-3 of Oryza sativa subsp. japonica (Rice).